Here is a 53-residue protein sequence, read N- to C-terminus: HOXB-AS3 peptide (53 aa).

The segment at 1–53 (MPVLPGTQRYPHQRRRFQAAGGGAESGKRGSEEAPGVAWSGSESGRDAATPAW) is disordered.

Interacts with HNRNPA1 (via the RGG-box). Interacts with IGF2BP2.

Its function is as follows. Blocks the binding of HNRNPA1 to the intronic sequences flanking exon 9 of the PKM gene by competitively binding to the HNRNPA1 RGG-box motif. This inhibits inclusion of exon 9 and promotes inclusion of exon 10, suppressing formation of the PKM M2 isoform and promoting production of the M1 isoform. Also suppresses HNRNPA1-mediated processing of microRNA 18a (miR-18a). Promotes MYC stability through interaction with IGF2BP2. The protein is HOXB-AS3 peptide of Homo sapiens (Human).